The following is a 179-amino-acid chain: ATP-dependent protease subunit HslV (179 aa).

Residue T5 is part of the active site. The Na(+) site is built by G164, C167, and T170.

The protein belongs to the peptidase T1B family. HslV subfamily. In terms of assembly, a double ring-shaped homohexamer of HslV is capped on each side by a ring-shaped HslU homohexamer. The assembly of the HslU/HslV complex is dependent on binding of ATP.

The protein resides in the cytoplasm. It catalyses the reaction ATP-dependent cleavage of peptide bonds with broad specificity.. Its activity is regulated as follows. Allosterically activated by HslU binding. In terms of biological role, protease subunit of a proteasome-like degradation complex believed to be a general protein degrading machinery. The protein is ATP-dependent protease subunit HslV of Verminephrobacter eiseniae (strain EF01-2).